Reading from the N-terminus, the 339-residue chain is uncharacterized protein (339 aa).

2 VOC domains span residues 2–127 (EFDY…VRSE) and 141–276 (TIDH…CLEI). Fe cation is bound by residues H144, H222, and E306.

The protein belongs to the 4HPPD family. It depends on Fe cation as a cofactor.

This is an uncharacterized protein from Synechocystis sp. (strain ATCC 27184 / PCC 6803 / Kazusa).